Reading from the N-terminus, the 419-residue chain is Peptide chain release factor subunit 1 (419 aa).

It belongs to the eukaryotic release factor 1 family. Heterodimer of two subunits, one of which binds GTP.

The protein resides in the cytoplasm. Directs the termination of nascent peptide synthesis (translation) in response to the termination codons UAA, UAG and UGA. The polypeptide is Peptide chain release factor subunit 1 (Methanococcus maripaludis (strain DSM 14266 / JCM 13030 / NBRC 101832 / S2 / LL)).